The chain runs to 864 residues: Coiled-coil and C2 domain-containing protein 1B (864 aa).

Positions 82–154 (QDCMTDMTGE…VNSSVAEIQH (73 aa)) are disordered. Acidic residues-rich tracts occupy residues 89-104 (TGEDDDDDLEEDEELL) and 111-129 (VGEEEEVEQSQPSDTEESE). Residues 91–118 (EDDDDDLEEDEELLAELQDVVGEEEEVE) adopt a coiled-coil conformation. Over residues 142 to 154 (EQQVNSSVAEIQH) the composition is skewed to polar residues. Positions 162-209 (GMLQVLEERIGNYKEAISNAKLSNESAKARRYERGLKTLESMLSAARQ) form a coiled coil. The disordered stretch occupies residues 218-249 (IPPPVACGKPAVSPTTDVPTTDTSKQGLGDLN). The segment covering 229 to 241 (VSPTTDVPTTDTS) has biased composition (low complexity). Residues 385–412 (VGSLLQALQQRMEKYKSAAQQAKSSGDD) are a coiled coil. Disordered stretches follow at residues 441 to 463 (AELPVPPGFPPLPGMEQTEEEGS) and 478 to 502 (AGEDVDDDEDECQAKPPGHPKPTQL). Positions 444 to 453 (PVPPGFPPLP) are enriched in pro residues. Coiled coils occupy residues 464–488 (VEKALEAAQKLAKTAGEDVDDDEDE) and 535–564 (PAVQEQLEFLEHRKKQYRKAALQAKQKNDL). Residues 685–820 (HFEDKTLKIV…ETQCEIREIV (136 aa)) enclose the C2 domain.

The protein belongs to the CC2D1 family.

The polypeptide is Coiled-coil and C2 domain-containing protein 1B (cc2d1b) (Xenopus laevis (African clawed frog)).